The following is a 376-amino-acid chain: Putative E3 ubiquitin-protein ligase XBAT34 (376 aa).

ANK repeat units follow at residues 41–71 and 77–106; these read LGRT…NVNA and NGGT…NPLV. Residues 325 to 364 form an RING-type zinc finger; that stretch reads CVICVDAPSEAVCVPCGHVAGCISCLKEIENKKMGCPVCR.

The catalysed reaction is S-ubiquitinyl-[E2 ubiquitin-conjugating enzyme]-L-cysteine + [acceptor protein]-L-lysine = [E2 ubiquitin-conjugating enzyme]-L-cysteine + N(6)-ubiquitinyl-[acceptor protein]-L-lysine.. The protein operates within protein modification; protein ubiquitination. Functionally, no E3 ubiquitin-protein ligase activity observed when associated with the E2 enzyme UBC8 in vitro. The chain is Putative E3 ubiquitin-protein ligase XBAT34 (XBAT34) from Arabidopsis thaliana (Mouse-ear cress).